Here is a 236-residue protein sequence, read N- to C-terminus: Proteasome subunit alpha (236 aa).

The protein belongs to the peptidase T1A family. In terms of assembly, the 20S proteasome core is composed of 14 alpha and 14 beta subunits that assemble into four stacked heptameric rings, resulting in a barrel-shaped structure. The two inner rings, each composed of seven catalytic beta subunits, are sandwiched by two outer rings, each composed of seven alpha subunits. The catalytic chamber with the active sites is on the inside of the barrel. Has a gated structure, the ends of the cylinder being occluded by the N-termini of the alpha-subunits. Is capped by the proteasome-associated ATPase, ARC.

Its subcellular location is the cytoplasm. It participates in protein degradation; proteasomal Pup-dependent pathway. The formation of the proteasomal ATPase ARC-20S proteasome complex, likely via the docking of the C-termini of ARC into the intersubunit pockets in the alpha-rings, may trigger opening of the gate for substrate entry. Interconversion between the open-gate and close-gate conformations leads to a dynamic regulation of the 20S proteasome proteolysis activity. Functionally, component of the proteasome core, a large protease complex with broad specificity involved in protein degradation. The polypeptide is Proteasome subunit alpha (Jonesia denitrificans (strain ATCC 14870 / DSM 20603 / BCRC 15368 / CIP 55.134 / JCM 11481 / NBRC 15587 / NCTC 10816 / Prevot 55134) (Listeria denitrificans)).